Here is a 136-residue protein sequence, read N- to C-terminus: Large ribosomal subunit protein bL20 (136 aa).

The protein belongs to the bacterial ribosomal protein bL20 family.

In terms of biological role, binds directly to 23S ribosomal RNA and is necessary for the in vitro assembly process of the 50S ribosomal subunit. It is not involved in the protein synthesizing functions of that subunit. The sequence is that of Large ribosomal subunit protein bL20 from Tropheryma whipplei (strain TW08/27) (Whipple's bacillus).